Here is a 339-residue protein sequence, read N- to C-terminus: Replication factor C subunit 5 (339 aa).

Position 59–66 (59–66 (GPPGTGKT)) interacts with ATP.

The protein belongs to the activator 1 small subunits family. Subunit of the RFC complex, an heteropentameric complex consisting of a large subunit RFC1 and four small subunits RFC2, RFC3, RFC4 and RFC5; the RFC complex interacts with PCNA. Forms an heterotetrameric complex with RFC2, RFC3 and RFC4; this complex has ATPase activity but is not stimulated by PCNA. The heterotetramer of subunits RFC2, RFC3, RFC4 and RFC5 interacts with RAD17.

It localises to the nucleus. Functionally, subunit of the replication factor C (RFC) complex which acts during elongation of primed DNA templates by DNA polymerases delta and epsilon, and is necessary for ATP-dependent loading of proliferating cell nuclear antigen (PCNA) onto primed DNA. The polypeptide is Replication factor C subunit 5 (Rfc5) (Mus musculus (Mouse)).